Consider the following 254-residue polypeptide: Alcohol dehydrogenase 2 (254 aa).

10 to 33 (FVAGLGGIGLDTSREIVKSGPKNL) is a binding site for NAD(+). Ser138 lines the substrate pocket. Tyr151 serves as the catalytic Proton acceptor.

It belongs to the short-chain dehydrogenases/reductases (SDR) family. In terms of assembly, homodimer.

It carries out the reaction a primary alcohol + NAD(+) = an aldehyde + NADH + H(+). The enzyme catalyses a secondary alcohol + NAD(+) = a ketone + NADH + H(+). This is Alcohol dehydrogenase 2 (Adh2) from Drosophila montana (Fruit fly).